A 526-amino-acid polypeptide reads, in one-letter code: Cytochrome P450 monooxygeanse terK (526 aa).

The chain crosses the membrane as a helical span at residues 21–43; sequence NWGQLTGALLFLAACTWIYLPAF. Cys-465 provides a ligand contact to heme.

The protein belongs to the cytochrome P450 family. Heme is required as a cofactor.

The protein localises to the membrane. The protein operates within secondary metabolite biosynthesis. Its function is as follows. Cytochrome P450 monooxygeanse; part of the gene cluster that mediates the biosynthesis of terpendoles, indole-diterpene (IDT) mycotoxins including terpendole I, terpendole K, terpendole C, as well as the kinesin Eg5 inhibitor terpendole E. Terpendoles biosynthesis begins with the synthesis of geranylgeranyl diphosphate (GGPP) by a yet unidentified GGPP synthase. Condensation of indole-3-glycerol phosphate with GGPP by the prenyltransferase terC then forms 3-geranylgeranylindole (3-GGI), followed by epoxidation and cyclization of this intermediate (by the FAD-dependent monooxygeanse terM and the terpene cyclase terB) to form paspaline. The cytochrome monooxygenase terQ then hydroxylates paspalline at C-11 to yield terpendole E. The cytochrome monooxygenase terP converts terpendole E to 13-desoxyterpendole I, and terQ converts 13-desoxyterpendole I into terpendole I. TerF and terK are required for conversion of terpendole I to terpendole C which is further converted to terpendole K. This Tolypocladium album (Soil fungus) protein is Cytochrome P450 monooxygeanse terK.